The sequence spans 259 residues: DNA-directed RNA polymerase subunit Rpo3 (259 aa).

The protein belongs to the archaeal Rpo3/eukaryotic RPB3 RNA polymerase subunit family. As to quaternary structure, part of the RNA polymerase complex.

The protein resides in the cytoplasm. The enzyme catalyses RNA(n) + a ribonucleoside 5'-triphosphate = RNA(n+1) + diphosphate. In terms of biological role, DNA-dependent RNA polymerase (RNAP) catalyzes the transcription of DNA into RNA using the four ribonucleoside triphosphates as substrates. The sequence is that of DNA-directed RNA polymerase subunit Rpo3 from Thermococcus kodakarensis (strain ATCC BAA-918 / JCM 12380 / KOD1) (Pyrococcus kodakaraensis (strain KOD1)).